A 154-amino-acid polypeptide reads, in one-letter code: SsrA-binding protein (154 aa).

This sequence belongs to the SmpB family.

The protein localises to the cytoplasm. Functionally, required for rescue of stalled ribosomes mediated by trans-translation. Binds to transfer-messenger RNA (tmRNA), required for stable association of tmRNA with ribosomes. tmRNA and SmpB together mimic tRNA shape, replacing the anticodon stem-loop with SmpB. tmRNA is encoded by the ssrA gene; the 2 termini fold to resemble tRNA(Ala) and it encodes a 'tag peptide', a short internal open reading frame. During trans-translation Ala-aminoacylated tmRNA acts like a tRNA, entering the A-site of stalled ribosomes, displacing the stalled mRNA. The ribosome then switches to translate the ORF on the tmRNA; the nascent peptide is terminated with the 'tag peptide' encoded by the tmRNA and targeted for degradation. The ribosome is freed to recommence translation, which seems to be the essential function of trans-translation. In Solidesulfovibrio magneticus (strain ATCC 700980 / DSM 13731 / RS-1) (Desulfovibrio magneticus), this protein is SsrA-binding protein.